Consider the following 207-residue polypeptide: Urease accessory protein UreG (207 aa).

14–21 (GPVGSGKT) lines the GTP pocket.

It belongs to the SIMIBI class G3E GTPase family. UreG subfamily. As to quaternary structure, homodimer. UreD, UreF and UreG form a complex that acts as a GTP-hydrolysis-dependent molecular chaperone, activating the urease apoprotein by helping to assemble the nickel containing metallocenter of UreC. The UreE protein probably delivers the nickel.

Its subcellular location is the cytoplasm. Functionally, facilitates the functional incorporation of the urease nickel metallocenter. This process requires GTP hydrolysis, probably effectuated by UreG. In Chelativorans sp. (strain BNC1), this protein is Urease accessory protein UreG.